The following is a 228-amino-acid chain: Clathrin light chain B (228 aa).

M1 is subject to Blocked amino end (Met). Positions 1-17 are enriched in low complexity; that stretch reads MADDFGFFSSSESGAPE. The tract at residues 1 to 80 is disordered; it reads MADDFGFFSS…VNGDVFQEAN (80 aa). A phosphoserine mark is found at S11 and S13. An involved in binding clathrin heavy chain region spans residues 92-154; it reads ADRLTQEPES…QVEKNKINNR (63 aa). A Phosphothreonine modification is found at T186. C198 and C208 are oxidised to a cystine. Position 203 is an N6-acetyllysine (K203). S216 bears the Phosphoserine mark.

It belongs to the clathrin light chain family. As to quaternary structure, clathrin coats are formed from molecules containing 3 heavy chains and 3 light chains. Interacts (via N-terminus) with HIP1. Interacts with HIP1R.

Its subcellular location is the cytoplasmic vesicle membrane. It localises to the membrane. The protein localises to the coated pit. Its function is as follows. Clathrin is the major protein of the polyhedral coat of coated pits and vesicles. This Bos taurus (Bovine) protein is Clathrin light chain B (CLTB).